A 546-amino-acid polypeptide reads, in one-letter code: Chaperonin GroEL (546 aa).

ATP-binding positions include 30–33 (TLGP), K51, 87–91 (DGTTT), G415, 479–481 (NAA), and D495. The segment at 526-546 (KKDEPAMPAGGGMGGMGGMDF) is disordered. Positions 534–546 (AGGGMGGMGGMDF) are enriched in gly residues.

It belongs to the chaperonin (HSP60) family. In terms of assembly, forms a cylinder of 14 subunits composed of two heptameric rings stacked back-to-back. Interacts with the co-chaperonin GroES.

Its subcellular location is the cytoplasm. It carries out the reaction ATP + H2O + a folded polypeptide = ADP + phosphate + an unfolded polypeptide.. Functionally, together with its co-chaperonin GroES, plays an essential role in assisting protein folding. The GroEL-GroES system forms a nano-cage that allows encapsulation of the non-native substrate proteins and provides a physical environment optimized to promote and accelerate protein folding. This Xanthomonas oryzae pv. oryzae (strain MAFF 311018) protein is Chaperonin GroEL.